The sequence spans 568 residues: MSMAGWITIGIFFLCVLALTRPLGGFLVSVLEGRRTFLSPILGPVERALYRFSGVRPEEEQSWSHYALALLSFKIVCFVAVYAILRLQAYLPLNPAGQGSVAPDLAYNTAVSFVTNTNWQSYGGETTMSYLSQMLGLTVQNFVSAAAGIAVAAAIIRGFARRESKAIGNFWVDMVRATLYVLLPISVVLSLFYVFEGIPQTFSGSVVATTYEGIHQTIALGPVASQEAIKMLGTNGGGFFNVNSAHPFENPDALTNFVEMISIFAIGAGLTNVFGRMVGNERQGWAVFSAMSVLFFVGVTAVYWAEAHGNPAFSAFGIDQSLGNMEGKETRFGVAASALFAAVTTDASCGAVNAMHESFLPLGGMVPLINMMLGEVIIGGVGAGLYGFILFAIIAVFMAGLMVGRTPEYLGKKIEAREIKMTMLAVLCLPLVMLGFTAVAVVVKPGLAALSATGPHGFTEALYAYTSAAANNGSAFAGLTANPYWNITLGIGMMIGRFFVIVPALAIAGSMAAKKIVPPSSGTFPTDTGLFIGLVAGVIIIVGGLTFLPALALGPIVEHLSMLRGTLY.

12 helical membrane passes run 7–27 (ITIG…GGFL), 65–85 (HYAL…YAIL), 136–156 (GLTV…AAII), 179–199 (LYVL…EGIP), 254–274 (LTNF…TNVF), 285–305 (WAVF…VYWA), 332–352 (FGVA…CGAV), 354–374 (AMHE…MMLG), 377–397 (IIGG…IAVF), 423–443 (MLAV…AVVV), 487–507 (ITLG…ALAI), and 530–550 (LFIG…FLPA).

The protein belongs to the KdpA family. In terms of assembly, the system is composed of three essential subunits: KdpA, KdpB and KdpC.

Its subcellular location is the cell inner membrane. Its function is as follows. Part of the high-affinity ATP-driven potassium transport (or Kdp) system, which catalyzes the hydrolysis of ATP coupled with the electrogenic transport of potassium into the cytoplasm. This subunit binds the periplasmic potassium ions and delivers the ions to the membrane domain of KdpB through an intramembrane tunnel. In Granulibacter bethesdensis (strain ATCC BAA-1260 / CGDNIH1), this protein is Potassium-transporting ATPase potassium-binding subunit.